We begin with the raw amino-acid sequence, 647 residues long: Macrolide export ATP-binding/permease protein MacB (647 aa).

An ABC transporter domain is found at 5–243; sequence LELKGIERSY…TQTPSLTSKI (239 aa). 41 to 48 lines the ATP pocket; the sequence is GASGSGKS. Helical transmembrane passes span 272–292, 522–542, 576–596, and 610–630; these read LLTMLGIIIGIASVVTILVIG, LFLTMVAVISLIVGGIGVMNI, ILVCLVGGVLGIGLSYTIAFI, and PIALLSAFACSTAIGVIFGFL.

Belongs to the ABC transporter superfamily. Macrolide exporter (TC 3.A.1.122) family. As to quaternary structure, homodimer. Part of the tripartite efflux system MacAB-TolC, which is composed of an inner membrane transporter, MacB, a periplasmic membrane fusion protein, MacA, and an outer membrane component, TolC. The complex forms a large protein conduit and can translocate molecules across both the inner and outer membranes. Interacts with MacA.

It is found in the cell inner membrane. In terms of biological role, part of the tripartite efflux system MacAB-TolC. MacB is a non-canonical ABC transporter that contains transmembrane domains (TMD), which form a pore in the inner membrane, and an ATP-binding domain (NBD), which is responsible for energy generation. Confers resistance against macrolides. The sequence is that of Macrolide export ATP-binding/permease protein MacB from Photorhabdus laumondii subsp. laumondii (strain DSM 15139 / CIP 105565 / TT01) (Photorhabdus luminescens subsp. laumondii).